The sequence spans 249 residues: MTIQQTELQELPLDLKRELLPKHVAVIMDGNGRWAKRQGLPRIMGHKRGVDALKDLLRCCRDWGIQALTAYAFSTENWKRPQEEVEFLMTLFQRVLRQELREMVEENVQIQFVGNLAALPRSLQAEISRSMEATKNNRGIRFSVATNYGGRQEILQACRAIAQKVQQGLLQPDEIDEEVFERHLYTAGIADPDLLIRTSGEMRLSNFLLWQMAYGEIYITDTLWPDFDRTEFHRALCAYQQRERRFGKV.

Asp29 is a catalytic residue. Mg(2+) is bound at residue Asp29. Substrate is bound by residues Gly30–Arg33, Trp34, Arg42, His46, and Ser74–Glu76. Residue Asn77 is the Proton acceptor of the active site. Residues Trp78, Arg80, Arg197, and Arg203–Ser205 each bind substrate. Glu216 lines the Mg(2+) pocket.

It belongs to the UPP synthase family. As to quaternary structure, homodimer. The cofactor is Mg(2+).

Catalyzes the condensation of isopentenyl diphosphate (IPP) with allylic pyrophosphates generating different type of terpenoids. This is Isoprenyl transferase from Trichormus variabilis (strain ATCC 29413 / PCC 7937) (Anabaena variabilis).